The chain runs to 77 residues: Lantipeptide prochlorosin 4.3 (77 aa).

Residues 1–64 (MSEEQLKAFI…DDELEGVAGG (64 aa)) constitute a propeptide that is removed on maturation. A 2,3-didehydrobutyrine modification is found at threonine 65. The lanthionine (Ser-Cys) cross-link spans 67–70 (SGGC). A cross-link (beta-methyllanthionine (Thr-Cys)) is located at residues 72-76 (TSMFC).

In terms of processing, cross-links are proved in vitro, when coepressed in E.coli with the ProcM lanthionine synthetase. The lanthionine residue has both a DL configuration (with 2S,6R stereochemistry) and a LL configuration (with 2R,6R stereochemistry). DL and LL diastomers have a 4:1 ratio. It is unknown whether nonenzymatic cyclization occur, but authors favor a model in which ProcM does generate all thioether cross-links. The beta-methyllanthionine residue has a DL configuration (with 2S,3S,6R stereochemistry). Post-translationally, maturation of prochlorosin involves the enzymatic conversion of Thr, and Ser into dehydrated AA and the formation of thioether bonds with cysteines. This is followed by membrane translocation and cleavage of the modified precursor.

The protein localises to the secreted. In terms of biological role, lanthionine-containing peptide (lantipeptide) with unknown function. Does not show antibiotic activity against Lactococcus lactis 117 and Bacillus subtilis 6633 bacteria. Organisms that produce this peptide live in oligotrophic environments at very dilute concentrations, suggesting this peptide is not secreted to influence other bacteria. The chain is Lantipeptide prochlorosin 4.3 from Prochlorococcus marinus (strain MIT 9313).